A 228-amino-acid polypeptide reads, in one-letter code: MLKVSCLFVLLCGLLVPSSAQQIPPEVSSQITDALTQGLLDGNFLSLLNAINLEGLLNTILDQVTGLLNILVGPLLGPSDAEIKLQDTRLLQLSLEFSPDSKGIDIWIPLELSVYLKLLILEPLTLYVRTDIRVQLRLESDEDGKYRLAFGHCSLLPRAIELQSGNPLSLPVNAVLGTIENALGNFITEDLGAGLCPTLNSLVSNLDLQLVNNLINLILDRANVDLSV.

An N-terminal signal peptide occupies residues 1 to 20 (MLKVSCLFVLLCGLLVPSSA). Cysteine 153 and cysteine 196 are disulfide-bonded.

Belongs to the BPI/LBP/Plunc superfamily. Plunc family. Monomer. Post-translationally, no sign of N-X-[ST] acceptor site even though reported as N-glycosylated. As to expression, found in sweat (at protein level).

It localises to the secreted. Its function is as follows. Major protein in sweat, has surfactant properties. Has a role in temperature regulation by having a capacity to make hydrophobic surfaces wettable and so can function in promoting spreading and evaporation of sweat. The polypeptide is Latherin (LATH) (Equus caballus (Horse)).